The following is a 762-amino-acid chain: Transcription factor kpeA (762 aa).

The tract at residues 267–361 (FDHTSHGSQS…PLKPDQRKQA (95 aa)) is disordered. Low complexity predominate over residues 294–312 (KKPSSPTRSTGSSSSTSPP). A DNA-binding region (zn(2)-C6 fungal-type) is located at residues 370-401 (CLRCKFLKKTCDKGEPCAGCQPSHARLWQVPC).

The protein resides in the nucleus. Functionally, transcription factor that regulates conidiation as well as kojic acid production, likely by negatively controlling kojR and kojA expression. In Aspergillus oryzae (strain ATCC 42149 / RIB 40) (Yellow koji mold), this protein is Transcription factor kpeA.